The chain runs to 195 residues: Imidazoleglycerol-phosphate dehydratase (195 aa).

Belongs to the imidazoleglycerol-phosphate dehydratase family.

The protein resides in the cytoplasm. The catalysed reaction is D-erythro-1-(imidazol-4-yl)glycerol 3-phosphate = 3-(imidazol-4-yl)-2-oxopropyl phosphate + H2O. It functions in the pathway amino-acid biosynthesis; L-histidine biosynthesis; L-histidine from 5-phospho-alpha-D-ribose 1-diphosphate: step 6/9. This chain is Imidazoleglycerol-phosphate dehydratase, found in Dinoroseobacter shibae (strain DSM 16493 / NCIMB 14021 / DFL 12).